The following is a 261-amino-acid chain: Ribosomal RNA small subunit methyltransferase A (261 aa).

The S-adenosyl-L-methionine site is built by asparagine 20, leucine 22, glycine 47, glutamate 68, aspartate 90, and asparagine 110.

The protein belongs to the class I-like SAM-binding methyltransferase superfamily. rRNA adenine N(6)-methyltransferase family. RsmA subfamily.

The protein resides in the cytoplasm. The catalysed reaction is adenosine(1518)/adenosine(1519) in 16S rRNA + 4 S-adenosyl-L-methionine = N(6)-dimethyladenosine(1518)/N(6)-dimethyladenosine(1519) in 16S rRNA + 4 S-adenosyl-L-homocysteine + 4 H(+). Functionally, specifically dimethylates two adjacent adenosines (A1518 and A1519) in the loop of a conserved hairpin near the 3'-end of 16S rRNA in the 30S particle. May play a critical role in biogenesis of 30S subunits. In Prosthecochloris aestuarii (strain DSM 271 / SK 413), this protein is Ribosomal RNA small subunit methyltransferase A.